The following is a 341-amino-acid chain: Twinfilin-2 (341 aa).

ADF-H domains are found at residues 1-131 (ATEE…KHLS) and 169-305 (GLAF…DEVH). Lys-6 bears the N6-acetyllysine mark. Tyr-301 carries the phosphotyrosine modification. The segment at 314–341 (AFAKPKGPGGKRGHKRLIRGPGENGDDS) is disordered. A compositionally biased stretch (basic residues) spans 322 to 331 (GGKRGHKRLI). The residue at position 341 (Ser-341) is a Phosphoserine.

Belongs to the actin-binding proteins ADF family. Twinfilin subfamily. Interacts with G-actin; ADP-actin form and capping protein (CP). May also be able to interact with TWF1 and phosphoinositides, PI(4,5)P2. When bound to PI(4,5)P2, it is down-regulated. Interacts with MYO7A. In terms of processing, phosphorylated on both serine and threonine residues.

It localises to the cytoplasm. The protein resides in the cytoskeleton. Its subcellular location is the perinuclear region. It is found in the cell projection. The protein localises to the stereocilium. In terms of biological role, actin-binding protein involved in motile and morphological processes. Inhibits actin polymerization, likely by sequestering G-actin. By capping the barbed ends of filaments, it also regulates motility. Seems to play an important role in clathrin-mediated endocytosis and distribution of endocytic organelles. May play a role in regulating the mature length of the middle and short rows of stereocilia. The sequence is that of Twinfilin-2 (TWF2) from Pongo abelii (Sumatran orangutan).